The chain runs to 574 residues: Developmental and secondary metabolism regulator veA (574 aa).

Disordered stretches follow at residues 1-22 (MATR…SRIT), 39-60 (ERAR…VDPP), 255-500 (RSSD…GAGK), and 513-548 (RSYE…GRNF). One can recognise a Velvet domain in the interval 25 to 230 (GKKLTYKLNV…AEQGCRVRIR (206 aa)). A Nuclear localization signal motif is present at residues 39–44 (ERARAC). Composition is skewed to pro residues over residues 314-323 (RPMPPAPVPA) and 330-341 (PAPPAPPAPPSH). Composition is skewed to polar residues over residues 343–359 (PGYQ…TQYP), 385–394 (HARNPSTSAE), 402–415 (YPSS…SSYP), and 448–458 (VAQSAGPRSQT). Residues 457-501 (QTPSSSLVPSLPPLKALSGDYPNNLSQPSSSISQSPSHDLGAGKK) form a PEST region. 2 stretches are compositionally biased toward low complexity: residues 459-474 (PSSS…KALS) and 482-493 (SQPSSSISQSPS). Composition is skewed to basic and acidic residues over residues 513–525 (RSYE…DDRP) and 532–543 (PDTESHPRRLSD).

Belongs to the velvet family. VeA subfamily. As to quaternary structure, component of the heterotrimeric velvet complex composed of laeA, veA and velB; VeA acting as a bridging protein between laeA and velB.

Its subcellular location is the nucleus. The protein resides in the cytoplasm. In terms of biological role, component of the velvet transcription factor complex that controls sexual/asexual developmental ratio in response to light, promoting sexual development in the darkness while stimulating asexual sporulation under illumination. The velvet complex hat acts as a global regulator for secondary metabolite gene expression. Controls the expression of the aflatoxin gene cluster. Required for the expression of aflR and aflJ. Mediates the coordination of aflatoxigenic vesicles (aflatoxisomes) development with aflatoxin gene expression. Regulates branched chain amino acid and ethanol metabolism and acts as a positive regulator of mitochondrial and peroxisomal beta-oxidation. The sequence is that of Developmental and secondary metabolism regulator veA from Aspergillus parasiticus.